Here is an 89-residue protein sequence, read N- to C-terminus: RNA-binding protein Hfq (89 aa).

The Sm domain occupies 14-73 (DPYLNALRKEKINVAIYLVNGVKLQGRVDSFDQFVVLLRSNVTQMVYKHAISTIVPARDP).

The protein belongs to the Hfq family. In terms of assembly, homohexamer.

RNA chaperone that binds small regulatory RNA (sRNAs) and mRNAs to facilitate mRNA translational regulation in response to envelope stress, environmental stress and changes in metabolite concentrations. Also binds with high specificity to tRNAs. The protein is RNA-binding protein Hfq of Hydrogenovibrio crunogenus (strain DSM 25203 / XCL-2) (Thiomicrospira crunogena).